The following is a 72-amino-acid chain: uncharacterized protein (72 aa).

Over 1-12 (MSKHKHEWTESV) the chain is Cytoplasmic. Residues 13–32 (ANSGPASILSYCASSILMTV) traverse the membrane as a helical segment. At 33-46 (TNKFVVNLDNFNMN) the chain is on the lumenal side. A helical transmembrane segment spans residues 47–69 (FVMLFVQSLVCTVTLCILRIVGV). The Cytoplasmic portion of the chain corresponds to 70 to 72 (ANF).

Belongs to the TPT transporter family. SLC35D subfamily.

The protein resides in the membrane. This is an uncharacterized protein from Saccharomyces cerevisiae (strain RM11-1a) (Baker's yeast).